The chain runs to 306 residues: MEEEKKKSRVLIIGATGRLGNYLTRFSIESGHPTFALIRNTTLSDKLKSLSDAGVTLLKGSLEDEGSLAEAVSKVDVVISAIPSKHVLDQKLLVRVIKQAGSIKRFIPAEYGANPDKTQVSDLDHDFYSKKSEIRHMIESEGIPYTYICCGLFMRVLLPSLVQPGLQSPPTDKVTVFGDGNVKAVFVNDVDVAAFTIKTIDDPRTLNKTLYLSPPGNICSMNDLVELWEGKIEKKLEKTFATENQLLKKIKETPYPDNMEMVFIYSVFIKGDHTYFDIESCGGVNGTELYPDVKYMTVSEFLDTLL.

NADP(+)-binding positions include 14-20, Arg-39, and Lys-46; that span reads GATGRLG. Residue Lys-131 is the Proton acceptor of the active site. Arg-135 serves as a coordination point for NADP(+).

The protein belongs to the NmrA-type oxidoreductase family. Isoflavone reductase subfamily. Dimer.

In terms of biological role, probable reductase that might be involved in the reduction of lariciresinol into secoisolariciresinol. In most plant species, a single enzyme is able to reduce both pinoresinol and lariciresinol efficiently while in Arabidopsis, PRR1 and PRR2 show a strict substrate selectivity for pinoresinol. In Arabidopsis thaliana (Mouse-ear cress), this protein is Probable pinoresinol-lariciresinol reductase 3 (PLR3).